The primary structure comprises 472 residues: Membrane-bound acylglycerophosphatidylinositol O-acyltransferase MBOAT7 (472 aa).

Residues 1 to 5 (MSPEE) lie on the Cytoplasmic side of the membrane. The helical transmembrane segment at 6-22 (WTYLVVLLISIPIGFLF) threads the bilayer. Over 23–33 (KKAGPGLKRWG) the chain is Lumenal. The helical transmembrane segment at 34 to 57 (AAAVGLGLTLFTCGPHTLHSLVTI) threads the bilayer. Residues 58–73 (LGTWALIQAQPCSCHA) are Cytoplasmic-facing. A helical membrane pass occupies residues 74 to 93 (LALAWTFSYLLFFRALSLLG). At 94–194 (LPTPTPFTNA…VPSLRPLLRR (101 aa)) the chain is on the lumenal side. A helical membrane pass occupies residues 195–212 (AWPAPLFGLLFLLSSHLF). The Cytoplasmic portion of the chain corresponds to 213–231 (PLEAVREDAFYARPLPARL). Residues 232-261 (FYMIPVFFAFRMRFYVAWIAAECGCIAAGF) traverse the membrane as a helical segment. Residues 262–426 (GAYPVAAKAR…LSLRDTLRYW (165 aa)) lie on the Lumenal side of the membrane. N-linked (GlcNAc...) asparagine glycosylation occurs at Asn-321. Residues 427–447 (ASVYFCVHVLALAALGLGLAL) form a helical membrane-spanning segment. Residues 448–472 (GRGGPGRRKSGAPAPSPASGKLREE) are Cytoplasmic-facing. Positions 450 to 472 (GGPGRRKSGAPAPSPASGKLREE) are disordered.

The protein belongs to the membrane-bound acyltransferase family. In terms of assembly, interacts with SPTSSA; the interaction facilitates MBOAT7 location to mitochondria-associated membranes (MAMs).

Its subcellular location is the endoplasmic reticulum membrane. The enzyme catalyses a 1-acyl-sn-glycero-3-phospho-(1D-myo-inositol) + an acyl-CoA = a 1,2-diacyl-sn-glycero-3-phospho-(1D-myo-inositol) + CoA. It catalyses the reaction a 1-acyl-sn-glycero-3-phospho-(1D-myo-inositol) + (5Z,8Z,11Z,14Z)-eicosatetraenoyl-CoA = a 1-acyl-2-(5Z,8Z,11Z,14Z-eicosatetraenoyl)-sn-glycero-3-phospho-(1D-myo-inositol) + CoA. It carries out the reaction (5Z,8Z,11Z,14Z)-eicosatetraenoyl-CoA + 1-hexadecanoyl-sn-glycero-3-phosphocholine = 1-hexadecanoyl-2-(5Z,8Z,11Z,14Z-eicosatetraenoyl)-sn-glycero-3-phosphocholine + CoA. The catalysed reaction is 1-octadecanoyl-sn-glycero-3-phospho-(1D-myo-inositol) + (5Z,8Z,11Z,14Z)-eicosatetraenoyl-CoA = 1-octadecanoyl-2-(5Z,8Z,11Z,14Z-eicosatetraenoyl)-sn-glycero-3-phospho-(1D-myo-inositol) + CoA. Its pathway is lipid metabolism; phospholipid metabolism. Functionally, acyltransferase which catalyzes the transfer of an acyl group from an acyl-CoA to a lysophosphatidylinositol (1-acylglycerophosphatidylinositol or LPI) leading to the production of a phosphatidylinositol (1,2-diacyl-sn-glycero-3-phosphoinositol or PI) and participates in the reacylation step of the phospholipid remodeling pathway also known as the Lands cycle. Prefers arachidonoyl-CoA as the acyl donor, thus contributing to the regulation of free levels arachidonic acid in cell. In liver, participates in the regulation of triglyceride metabolism through the phosphatidylinositol acyl-chain remodeling regulation. The sequence is that of Membrane-bound acylglycerophosphatidylinositol O-acyltransferase MBOAT7 (MBOAT7) from Bos taurus (Bovine).